The following is a 364-amino-acid chain: Fructose-bisphosphate aldolase B (364 aa).

A2 bears the N-acetylalanine mark. An N6-succinyllysine modification is found at K13. S36 bears the Phosphoserine mark. T39 is modified (phosphothreonine). R43 is a beta-D-fructose 1,6-bisphosphate binding site. The residue at position 89 (S89) is a Phosphoserine. At T119 the chain carries Phosphothreonine. K121 is subject to N6-succinyllysine. Position 132 is a phosphoserine (S132). Residue E188 is the Proton acceptor of the active site. The active-site Schiff-base intermediate with dihydroxyacetone-P is the K230. S272, S276, S299, and S301 each carry phosphoserine. 272–274 contributes to the beta-D-fructose 1,6-bisphosphate binding site; the sequence is SGG. R304 is a binding site for beta-D-fructose 1,6-bisphosphate. Phosphoserine is present on S309. N6-succinyllysine is present on K317.

This sequence belongs to the class I fructose-bisphosphate aldolase family. As to quaternary structure, homotetramer. Interacts with BBS1, BBS2, BBS4 and BBS7. Forms a ternary complex with G6PD and TP53; this interaction is direct.

It localises to the cytoplasm. Its subcellular location is the cytosol. It is found in the cytoskeleton. The protein localises to the microtubule organizing center. The protein resides in the centrosome. It localises to the centriolar satellite. It carries out the reaction beta-D-fructose 1,6-bisphosphate = D-glyceraldehyde 3-phosphate + dihydroxyacetone phosphate. It catalyses the reaction beta-D-fructose 1-phosphate = D-glyceraldehyde + dihydroxyacetone phosphate. Its pathway is carbohydrate degradation; glycolysis; D-glyceraldehyde 3-phosphate and glycerone phosphate from D-glucose: step 4/4. It participates in carbohydrate biosynthesis; gluconeogenesis. It functions in the pathway carbohydrate metabolism; fructose metabolism. In terms of biological role, catalyzes the aldol cleavage of fructose 1,6-biphosphate to form two triosephosphates dihydroxyacetone phosphate and D-glyceraldehyde 3-phosphate in glycolysis as well as the reverse stereospecific aldol addition reaction in gluconeogenesis. In fructolysis, metabolizes fructose 1-phosphate derived from the phosphorylation of dietary fructose by fructokinase into dihydroxyacetone phosphate and D-glyceraldehyde. Acts as an adapter independently of its enzymatic activity, exerts a tumor suppressor role by stabilizing the ternary complex with G6PD and TP53 to inhibit G6PD activity and keep oxidative pentose phosphate metabolism in check. The polypeptide is Fructose-bisphosphate aldolase B (Homo sapiens (Human)).